The sequence spans 167 residues: Ubiquitin-fold modifier-conjugating enzyme 1 (167 aa).

Cysteine 116 (glycyl thioester intermediate) is an active-site residue. Lysine 122 participates in a covalent cross-link: Glycyl lysine isopeptide (Lys-Gly) (interchain with G-Cter in UFM1).

Belongs to the ubiquitin-conjugating enzyme family. UFC1 subfamily. In terms of assembly, interacts with UBA5 (via C-terminus). Interacts with UFL1. Interacts with UFM1. Interacts with KIRREL3. In terms of processing, ufmylated at Lys-122. Deufmylated by UFSP1.

In terms of biological role, E2-like enzyme which specifically catalyzes the second step in ufmylation. Accepts the ubiquitin-like modifier UFM1 from the E1 enzyme UBA5 and forms an intermediate with UFM1 via a thioester linkage. Ufmylation is involved in various processes, such as ribosome recycling, response to DNA damage, interferon response or reticulophagy (also called ER-phagy). The protein is Ubiquitin-fold modifier-conjugating enzyme 1 of Mus musculus (Mouse).